The chain runs to 353 residues: MAVKGDDVKWKGIPMKYIALVLLTVQNSALILTLNYSRIMPGYDDKRYFTSTAVLLNELIKLVVCFSVGYHQFRKNVGKEAKLRAFLPQIFGGDSWKLAIPAFLYTCQNNLQYVAAGNLTAASFQVTYQLKILTTAIFSILLLHRRLGPMKWFSLFLLTGGIAIVQLQNLNSDDQMSAGPMNPVTGFSAVLVACLISGLAGVYFEKVLKDTNPSLWVRNVQLSFFSLFPCLFTILMKDYHNIAENGFFFGYNSIVWLAILLQAGGGIIVALCVAFADNIMKNFSTSISIIISSLASVYLMDFKISLTFLIGVMLVIAATFLYTKPESKPSPSRGTYIPMTTQDAAAKDVDHKH.

6 helical membrane-spanning segments follow: residues 147–167 (LGPM…IVQL), 184–204 (VTGF…GVYF), 215–235 (LWVR…FTIL), 254–274 (IVWL…LCVA), 279–299 (IMKN…SVYL), and 302–322 (FKIS…TFLY). The interval 325-353 (PESKPSPSRGTYIPMTTQDAAAKDVDHKH) is disordered. A compositionally biased stretch (polar residues) spans 329 to 343 (PSPSRGTYIPMTTQD).

The protein belongs to the nucleotide-sugar transporter family. SLC35A subfamily.

Its subcellular location is the golgi apparatus membrane. Its function is as follows. Essential for the transport of UDP-galactose into the lumen of Golgi apparatus. This chain is UDP-galactose transporter (gms1), found in Schizosaccharomyces pombe (strain 972 / ATCC 24843) (Fission yeast).